The following is a 347-amino-acid chain: Very-long-chain 3-oxoacyl-CoA reductase (347 aa).

A helical membrane pass occupies residues 20–40 (LLWVVFGLGVLKCTTLSLRFL). Positions 66, 120, 147, 223, 227, 256, and 258 each coordinate NADP(+). Tyr-223 acts as the Proton donor in catalysis. The active-site Lowers pKa of active site Tyr is Lys-227.

The protein belongs to the short-chain dehydrogenases/reductases (SDR) family. As to quaternary structure, interacts with the fatty acid elongation system components ELO3 and TSC13.

The protein localises to the endoplasmic reticulum membrane. It carries out the reaction a very-long-chain (3R)-3-hydroxyacyl-CoA + NADP(+) = a very-long-chain 3-oxoacyl-CoA + NADPH + H(+). It participates in lipid metabolism; fatty acid biosynthesis. Component of the microsomal membrane bound fatty acid elongation system, which produces the 26-carbon very long-chain fatty acids (VLCFA) from palmitate. Catalyzes the reduction of the 3-ketoacyl-CoA intermediate that is formed in each cycle of fatty acid elongation. VLCFAs serve as precursors for ceramide and sphingolipids. This Saccharomyces cerevisiae (strain RM11-1a) (Baker's yeast) protein is Very-long-chain 3-oxoacyl-CoA reductase.